A 285-amino-acid polypeptide reads, in one-letter code: Pantothenate synthetase (285 aa).

30-37 contributes to the ATP binding site; that stretch reads MGNLHDGH. The active-site Proton donor is the histidine 37. Residue glutamine 61 participates in (R)-pantoate binding. Glutamine 61 provides a ligand contact to beta-alanine. 148–151 provides a ligand contact to ATP; that stretch reads GEKD. Position 154 (glutamine 154) interacts with (R)-pantoate. Residue 185-188 coordinates ATP; the sequence is RSSR.

It belongs to the pantothenate synthetase family. Homodimer.

The protein resides in the cytoplasm. The catalysed reaction is (R)-pantoate + beta-alanine + ATP = (R)-pantothenate + AMP + diphosphate + H(+). The protein operates within cofactor biosynthesis; (R)-pantothenate biosynthesis; (R)-pantothenate from (R)-pantoate and beta-alanine: step 1/1. Catalyzes the condensation of pantoate with beta-alanine in an ATP-dependent reaction via a pantoyl-adenylate intermediate. In Alcanivorax borkumensis (strain ATCC 700651 / DSM 11573 / NCIMB 13689 / SK2), this protein is Pantothenate synthetase.